Reading from the N-terminus, the 182-residue chain is NAD(P)H-quinone oxidoreductase subunit I, chloroplastic (182 aa).

2 consecutive 4Fe-4S ferredoxin-type domains span residues 55-84 (GRIHFEFDKCIACEVCVRVCPIDLPVVDWK) and 95-124 (LNYSIDFGICIFCGNCVEYCPTNCLSMTEE). The [4Fe-4S] cluster site is built by Cys64, Cys67, Cys70, Cys74, Cys104, Cys107, Cys110, and Cys114.

It belongs to the complex I 23 kDa subunit family. As to quaternary structure, NDH is composed of at least 16 different subunits, 5 of which are encoded in the nucleus. The cofactor is [4Fe-4S] cluster.

The protein resides in the plastid. Its subcellular location is the chloroplast thylakoid membrane. It carries out the reaction a plastoquinone + NADH + (n+1) H(+)(in) = a plastoquinol + NAD(+) + n H(+)(out). It catalyses the reaction a plastoquinone + NADPH + (n+1) H(+)(in) = a plastoquinol + NADP(+) + n H(+)(out). NDH shuttles electrons from NAD(P)H:plastoquinone, via FMN and iron-sulfur (Fe-S) centers, to quinones in the photosynthetic chain and possibly in a chloroplast respiratory chain. The immediate electron acceptor for the enzyme in this species is believed to be plastoquinone. Couples the redox reaction to proton translocation, and thus conserves the redox energy in a proton gradient. This Buxus microphylla (Littleleaf boxwood) protein is NAD(P)H-quinone oxidoreductase subunit I, chloroplastic.